Reading from the N-terminus, the 592-residue chain is MMNKLYIGNLSPAVTADDLRQLFGDRKLPLAGQVLLKSGYAFVDYPDQNWAIRAIETLSGKVELHGKIMEVDYSVSKKLRSRRIQIRNIPPHLQWEVLDGLLAEYGTVENVEQVNTDTETAVVNVTYMTREEAKLAIEKLSGHQFEDYSFKISYIPDEEVSSPSPPHRAREQGHGPGSSSQARQIDFPLRILVPTQFVGAIIGKEGLTIKNITKQTQSRVDIHRKENSGAAEKPVTIHATPEGTSEACRMILEIMQKEADETKLAEEVPLKILAHNGFVGRLIGKEGRNLKKIEHETGTKITISSLQDLSIYNPERTITVRGTIEACANAEIEIMKKLREAFENDMLAVNQQANLIPGLNLSALGIFSTGLSVLPPPAGPRGVPPSPPYHPFATHSGYFSSLYPHHHFGPFPHHHSYPEQETVSLFIPTQAVGAIIGKKGAHIKQLARFAGASIKIAPAEGPDVSERMVIITGPPEAQFKAQGRIFGKLKEENFFNPKEEVKLEAHIRVPSSTAGRVIGKGGKTVNELQNLTSAEVIVPRDQTPDENEEVIVRIIGHFFASQTAQRKIREIVQQVKQQEQRYPQGVAPQRSK.

RRM domains lie at 3–76 and 82–157; these read NKLY…YSVS and RRIQ…YIPD. Ser-11 is modified (phosphoserine). Positions 157–182 are disordered; that stretch reads DEEVSSPSPPHRAREQGHGPGSSSQA. Ser-162 and Ser-164 each carry phosphoserine. KH domains lie at 186 to 251, 267 to 334, 420 to 485, and 502 to 568; these read DFPL…CRMI, EVPL…EIEI, QETV…QGRI, and KLEA…QRKI. Position 543 is a phosphothreonine (Thr-543).

The protein belongs to the RRM IMP/VICKZ family. In terms of assembly, can form homooligomers and heterooligomers with IGF2BP1 and IGF2BP3 in an RNA-dependent manner. Interacts with HNRPD. Interacts with IGF2BP1. Interacts with ELAVL1, DHX9, HNRNPU, MATR3 and PABPC1. Expressed in oocytes, granulosa cells of small and growing follicles and Leydig cells of the testis (at protein level). Expressed in testis and ovary.

The protein localises to the nucleus. It is found in the cytoplasm. The protein resides in the P-body. Its subcellular location is the stress granule. Functionally, RNA-binding factor that recruits target transcripts to cytoplasmic protein-RNA complexes (mRNPs). This transcript 'caging' into mRNPs allows mRNA transport and transient storage. It also modulates the rate and location at which target transcripts encounter the translational apparatus and shields them from endonuclease attacks or microRNA-mediated degradation. Preferentially binds to N6-methyladenosine (m6A)-containing mRNAs and increases their stability. Binds to the 5'-UTR of the insulin-like growth factor 2 (IGF2) mRNAs. Binding is isoform-specific. Binds to beta-actin/ACTB and MYC transcripts. Increases MYC mRNA stability by binding to the coding region instability determinant (CRD) and binding is enhanced by m6A-modification of the CRD. This is Insulin-like growth factor 2 mRNA-binding protein 2 (Igf2bp2) from Mus musculus (Mouse).